We begin with the raw amino-acid sequence, 376 residues long: 5-hydroxytryptamine receptor 1D (376 aa).

The tract at residues 1-22 (MSPPNQSEEGLPQEASNRSLNA) is disordered. 3 N-linked (GlcNAc...) asparagine glycosylation sites follow: asparagine 5, asparagine 17, and asparagine 21. 3 helical membrane-spanning segments follow: residues 39 to 64 (VSLV…TTIL), 76 to 97 (LIGS…ISIA), and 110 to 134 (LCDI…VIAL). A disulfide bridge links cysteine 111 with cysteine 188. Serotonin is bound by residues aspartate 118 and cysteine 122. The short motif at 135-137 (DRY) is the DRY motif; important for ligand-induced conformation changes element. 4 consecutive transmembrane segments (helical) span residues 155–176 (AGAM…PLFW), 195–218 (ISYT…ILYS), 300–325 (KTLG…VLPI), and 335–358 (ALFD…YTVF). Serine 320 serves as a coordination point for serotonin. The short motif at 351–355 (NPIIY) is the NPxxY motif; important for ligand-induced conformation changes and signaling element.

This sequence belongs to the G-protein coupled receptor 1 family. In terms of assembly, homodimer. Heterodimer with HTR1B.

The protein localises to the cell membrane. G-protein coupled receptor for 5-hydroxytryptamine (serotonin). Also functions as a receptor for ergot alkaloid derivatives, various anxiolytic and antidepressant drugs and other psychoactive substances. Ligand binding causes a conformation change that triggers signaling via guanine nucleotide-binding proteins (G proteins) and modulates the activity of downstream effectors, such as adenylate cyclase. HTR1D is coupled to G(i)/G(o) G alpha proteins and mediates inhibitory neurotransmission by inhibiting adenylate cyclase activity. Regulates the release of 5-hydroxytryptamine in the brain, and thereby affects neural activity. May also play a role in regulating the release of other neurotransmitters. May play a role in vasoconstriction. The sequence is that of 5-hydroxytryptamine receptor 1D (HTR1D) from Cavia porcellus (Guinea pig).